Consider the following 176-residue polypeptide: Shikimate kinase (176 aa).

10–15 (TSGKSS) provides a ligand contact to ATP. A Mg(2+)-binding site is contributed by Ser-14. 3 residues coordinate substrate: Asp-32, Gly-81, and Arg-138.

It belongs to the shikimate kinase family. Monomer. Mg(2+) serves as cofactor.

It localises to the cytoplasm. The catalysed reaction is shikimate + ATP = 3-phosphoshikimate + ADP + H(+). It functions in the pathway metabolic intermediate biosynthesis; chorismate biosynthesis; chorismate from D-erythrose 4-phosphate and phosphoenolpyruvate: step 5/7. In terms of biological role, catalyzes the specific phosphorylation of the 3-hydroxyl group of shikimic acid using ATP as a cosubstrate. This chain is Shikimate kinase, found in Chlamydia pneumoniae (Chlamydophila pneumoniae).